Consider the following 1642-residue polypeptide: DNA-directed RNA polymerase I subunit RPA1 (1642 aa).

Zn(2+)-binding residues include cysteine 66, cysteine 69, cysteine 75, and histidine 78. Mg(2+) is bound by residues aspartate 565, aspartate 567, and aspartate 569. Residues 939–951 (PQDFFFHCMAGRE) form a bridging helix region. The tract at residues 1337–1428 (DADKDDDNDL…GNDNDGDDKA (92 aa)) is disordered. Residues 1340-1350 (KDDDNDLDNGD) show a composition bias toward acidic residues. The segment covering 1351–1361 (EVGRSKAKAND) has biased composition (basic and acidic residues). Acidic residues-rich tracts occupy residues 1362–1373 (DDSSDDNDDDDA) and 1386–1424 (KDYDDPDDVEELHDANDDDDEAEDEDDEEKGQDGNDNDG). 2 positions are modified to phosphoserine: serine 1364 and serine 1365.

This sequence belongs to the RNA polymerase beta' chain family. In terms of assembly, component of the RNA polymerase I (Pol I) complex consisting of at least 13 subunits. Post-translationally, phosphorylated.

Its subcellular location is the nucleus. The protein localises to the nucleolus. The enzyme catalyses RNA(n) + a ribonucleoside 5'-triphosphate = RNA(n+1) + diphosphate. Its function is as follows. DNA-dependent RNA polymerase catalyzes the transcription of DNA into RNA using the four ribonucleoside triphosphates as substrates. Largest and catalytic core component of RNA polymerase I which synthesizes ribosomal RNA precursors. Forms the polymerase active center together with the second largest subunit. A single stranded DNA template strand of the promoter is positioned within the central active site cleft of Pol I. A bridging helix emanates from RPA1 and crosses the cleft near the catalytic site and is thought to promote translocation of Pol I by acting as a ratchet that moves the RNA-DNA hybrid through the active site by switching from straight to bent conformations at each step of nucleotide addition. This is DNA-directed RNA polymerase I subunit RPA1 (RpI1) from Drosophila melanogaster (Fruit fly).